The sequence spans 862 residues: Alanine--tRNA ligase (862 aa).

Residues histidine 552, histidine 556, cysteine 653, and histidine 657 each coordinate Zn(2+).

This sequence belongs to the class-II aminoacyl-tRNA synthetase family. Zn(2+) is required as a cofactor.

It localises to the cytoplasm. The enzyme catalyses tRNA(Ala) + L-alanine + ATP = L-alanyl-tRNA(Ala) + AMP + diphosphate. Functionally, catalyzes the attachment of alanine to tRNA(Ala) in a two-step reaction: alanine is first activated by ATP to form Ala-AMP and then transferred to the acceptor end of tRNA(Ala). Also edits incorrectly charged Ser-tRNA(Ala) and Gly-tRNA(Ala) via its editing domain. The protein is Alanine--tRNA ligase of Nitrosospira multiformis (strain ATCC 25196 / NCIMB 11849 / C 71).